We begin with the raw amino-acid sequence, 227 residues long: ATP synthase F(0) complex subunit a (227 aa).

The next 6 membrane-spanning stretches (helical) occupy residues 14–34 (LLGH…FPSP), 69–89 (WALM…LGLL), 98–118 (QLSM…LTGL), 139–159 (IPAL…ALGV), 167–187 (AGHL…PILP), and 190–210 (SILT…VAMI).

This sequence belongs to the ATPase A chain family. In terms of assembly, component of the ATP synthase complex composed at least of ATP5F1A/subunit alpha, ATP5F1B/subunit beta, ATP5MC1/subunit c (homooctomer), MT-ATP6/subunit a, MT-ATP8/subunit 8, ATP5ME/subunit e, ATP5MF/subunit f, ATP5MG/subunit g, ATP5MK/subunit k, ATP5MJ/subunit j, ATP5F1C/subunit gamma, ATP5F1D/subunit delta, ATP5F1E/subunit epsilon, ATP5PF/subunit F6, ATP5PB/subunit b, ATP5PD/subunit d, ATP5PO/subunit OSCP. ATP synthase complex consists of a soluble F(1) head domain (subunits alpha(3) and beta(3)) - the catalytic core - and a membrane F(0) domain - the membrane proton channel (subunits c, a, 8, e, f, g, k and j). These two domains are linked by a central stalk (subunits gamma, delta, and epsilon) rotating inside the F1 region and a stationary peripheral stalk (subunits F6, b, d, and OSCP). Interacts with DNAJC30; interaction is direct.

The protein localises to the mitochondrion inner membrane. It carries out the reaction H(+)(in) = H(+)(out). In terms of biological role, subunit a, of the mitochondrial membrane ATP synthase complex (F(1)F(0) ATP synthase or Complex V) that produces ATP from ADP in the presence of a proton gradient across the membrane which is generated by electron transport complexes of the respiratory chain. ATP synthase complex consist of a soluble F(1) head domain - the catalytic core - and a membrane F(1) domain - the membrane proton channel. These two domains are linked by a central stalk rotating inside the F(1) region and a stationary peripheral stalk. During catalysis, ATP synthesis in the catalytic domain of F(1) is coupled via a rotary mechanism of the central stalk subunits to proton translocation. With the subunit c (ATP5MC1), forms the proton-conducting channel in the F(0) domain, that contains two crucial half-channels (inlet and outlet) that facilitate proton movement from the mitochondrial intermembrane space (IMS) into the matrix. Protons are taken up via the inlet half-channel and released through the outlet half-channel, following a Grotthuss mechanism. This chain is ATP synthase F(0) complex subunit a, found in Anas platyrhynchos (Mallard).